Here is a 347-residue protein sequence, read N- to C-terminus: Ribosomal RNA small subunit methyltransferase C (347 aa).

This sequence belongs to the methyltransferase superfamily. RsmC family. Monomer.

The protein localises to the cytoplasm. The catalysed reaction is guanosine(1207) in 16S rRNA + S-adenosyl-L-methionine = N(2)-methylguanosine(1207) in 16S rRNA + S-adenosyl-L-homocysteine + H(+). Functionally, specifically methylates the guanine in position 1207 of 16S rRNA in the 30S particle. This is Ribosomal RNA small subunit methyltransferase C from Yersinia enterocolitica serotype O:8 / biotype 1B (strain NCTC 13174 / 8081).